A 269-amino-acid polypeptide reads, in one-letter code: Cytochrome c oxidase subunit 3 (269 aa).

The next 7 helical transmembrane spans lie at 21–41, 45–65, 90–110, 127–147, 167–187, 204–224, and 247–267; these read PWPI…GLTM, IVGN…MTMW, GFLL…WAYF, VGIT…ILLA, ALNG…CQYI, VFFA…IMLA, and ILYL…MYWW.

This sequence belongs to the cytochrome c oxidase subunit 3 family. As to quaternary structure, component of the cytochrome c oxidase (complex IV, CIV), a multisubunit enzyme composed of a catalytic core of 3 subunits and several supernumerary subunits. The complex exists as a monomer or a dimer and forms supercomplexes (SCs) in the inner mitochondrial membrane with ubiquinol-cytochrome c oxidoreductase (cytochrome b-c1 complex, complex III, CIII).

The protein localises to the mitochondrion inner membrane. The catalysed reaction is 4 Fe(II)-[cytochrome c] + O2 + 8 H(+)(in) = 4 Fe(III)-[cytochrome c] + 2 H2O + 4 H(+)(out). Component of the cytochrome c oxidase, the last enzyme in the mitochondrial electron transport chain which drives oxidative phosphorylation. The respiratory chain contains 3 multisubunit complexes succinate dehydrogenase (complex II, CII), ubiquinol-cytochrome c oxidoreductase (cytochrome b-c1 complex, complex III, CIII) and cytochrome c oxidase (complex IV, CIV), that cooperate to transfer electrons derived from NADH and succinate to molecular oxygen, creating an electrochemical gradient over the inner membrane that drives transmembrane transport and the ATP synthase. Cytochrome c oxidase is the component of the respiratory chain that catalyzes the reduction of oxygen to water. Electrons originating from reduced cytochrome c in the intermembrane space (IMS) are transferred via the dinuclear copper A center (CU(A)) of subunit 2 and heme A of subunit 1 to the active site in subunit 1, a binuclear center (BNC) formed by heme A3 and copper B (CU(B)). The BNC reduces molecular oxygen to 2 water molecules using 4 electrons from cytochrome c in the IMS and 4 protons from the mitochondrial matrix. This is Cytochrome c oxidase subunit 3 (COX3) from Wickerhamomyces canadensis (Yeast).